The sequence spans 406 residues: NAC transcription factor NAM-B1 (406 aa).

Positions 1-11 are enriched in polar residues; sequence MGSPDSSSGSA. The disordered stretch occupies residues 1–40; it reads MGSPDSSSGSAQKPPRHQHQHQPPPPRRQGSAPELPPGFR. The NAC domain maps to 35–204; it reads LPPGFRFHPT…DWVLCRIYKK (170 aa). The DNA-binding element occupies 137–210; it reads VGVKKALVFY…IYKKTSKAAA (74 aa).

The protein resides in the nucleus. In terms of biological role, transcription factor of the NAC family associated with the grain protein content (GPC). Sequences of the 11 European varieties of H.vulgare tested belongs to the same haplotype while the sequence found in H.spontaneum, an ancestor of the cultivated H.vulgare which has a higher GPC, belongs to an other haplotype. This chain is NAC transcription factor NAM-B1 (NAM-B1), found in Hordeum vulgare subsp. spontaneum (Wild barley).